The chain runs to 201 residues: Large ribosomal subunit protein uL4 (201 aa).

Positions 44–68 are disordered; it reads RAQKSRAEVSGSGRKPWRQKGTGRA.

Belongs to the universal ribosomal protein uL4 family. In terms of assembly, part of the 50S ribosomal subunit.

Functionally, one of the primary rRNA binding proteins, this protein initially binds near the 5'-end of the 23S rRNA. It is important during the early stages of 50S assembly. It makes multiple contacts with different domains of the 23S rRNA in the assembled 50S subunit and ribosome. In terms of biological role, forms part of the polypeptide exit tunnel. The sequence is that of Large ribosomal subunit protein uL4 from Buchnera aphidicola subsp. Acyrthosiphon pisum (strain APS) (Acyrthosiphon pisum symbiotic bacterium).